Reading from the N-terminus, the 226-residue chain is 3-dehydroquinate dehydratase (226 aa).

Residues serine 9, 32–34, and arginine 59 each bind 3-dehydroquinate; that span reads EVR. The active-site Proton donor/acceptor is the histidine 119. The Schiff-base intermediate with substrate role is filled by lysine 146. The 3-dehydroquinate site is built by arginine 187, threonine 208, and glutamine 212.

The protein belongs to the type-I 3-dehydroquinase family. In terms of assembly, homodimer.

The enzyme catalyses 3-dehydroquinate = 3-dehydroshikimate + H2O. The protein operates within metabolic intermediate biosynthesis; chorismate biosynthesis; chorismate from D-erythrose 4-phosphate and phosphoenolpyruvate: step 3/7. Involved in the third step of the chorismate pathway, which leads to the biosynthesis of aromatic amino acids. Catalyzes the cis-dehydration of 3-dehydroquinate (DHQ) and introduces the first double bond of the aromatic ring to yield 3-dehydroshikimate. In Desulfotalea psychrophila (strain LSv54 / DSM 12343), this protein is 3-dehydroquinate dehydratase.